The chain runs to 857 residues: Leucine--tRNA ligase (857 aa).

Residues 42-52 carry the 'HIGH' region motif; sequence PYPSGTLHMGH. Residues 616 to 620 carry the 'KMSKS' region motif; the sequence is KMSKS. Position 619 (Lys619) interacts with ATP.

The protein belongs to the class-I aminoacyl-tRNA synthetase family.

It localises to the cytoplasm. It carries out the reaction tRNA(Leu) + L-leucine + ATP = L-leucyl-tRNA(Leu) + AMP + diphosphate. This Parasynechococcus marenigrum (strain WH8102) protein is Leucine--tRNA ligase.